Reading from the N-terminus, the 789-residue chain is Probable Xaa-Pro aminopeptidase SNOG_02267 (789 aa).

Mn(2+) contacts are provided by Asp240, Asp251, Glu375, and Glu416. Disordered regions lie at residues 607-658 (SMSK…TGLA) and 670-704 (NHVS…DDAL). The span at 622–637 (VISQKQIRNRRSVSST) shows a compositional bias: polar residues. Positions 638–650 (ARHDLRGDRERPQ) are enriched in basic and acidic residues.

This sequence belongs to the peptidase M24B family. Mn(2+) is required as a cofactor.

The catalysed reaction is Release of any N-terminal amino acid, including proline, that is linked to proline, even from a dipeptide or tripeptide.. Catalyzes the removal of a penultimate prolyl residue from the N-termini of peptides. The sequence is that of Probable Xaa-Pro aminopeptidase SNOG_02267 from Phaeosphaeria nodorum (strain SN15 / ATCC MYA-4574 / FGSC 10173) (Glume blotch fungus).